The sequence spans 158 residues: MATEKTYPMTQEGKQKLENELEDLKTVKRKEVVERIKIARSFGDLSENSEYDAAKDEQAFVEGRITQLENMIRNAVIITDNGEESTVVTLGKTVTFKELPNGDEEAYTIVGSAEADPFEGRISNDSPIAKSLLGKQIGEKVAIQTPGGEMQVEIISVK.

A coiled-coil region spans residues Glu-4–Ala-75.

Belongs to the GreA/GreB family.

Its function is as follows. Necessary for efficient RNA polymerase transcription elongation past template-encoded arresting sites. The arresting sites in DNA have the property of trapping a certain fraction of elongating RNA polymerases that pass through, resulting in locked ternary complexes. Cleavage of the nascent transcript by cleavage factors such as GreA or GreB allows the resumption of elongation from the new 3'terminus. GreA releases sequences of 2 to 3 nucleotides. In Bacillus anthracis (strain A0248), this protein is Transcription elongation factor GreA.